The sequence spans 361 residues: C3a anaphylatoxin chemotactic receptor (361 aa).

Topologically, residues 1 to 64 (MQQETQAPPL…FASSEVRVIS (64 aa)) are extracellular. N-linked (GlcNAc...) asparagine glycosylation is found at asparagine 36 and asparagine 50. Residues 65-85 (LVVYCLTFLLGVPGNSFVIFI) traverse the membrane as a helical segment. At 86–96 (AGMKMKRTVNT) the chain is on the cytoplasmic side. A helical transmembrane segment spans residues 97–117 (IWFLNLATADLLCCLSVPLTV). Residues 118–134 (AEILLDHHWPYGYAMCK) lie on the Extracellular side of the membrane. The cysteines at positions 133 and 210 are disulfide-linked. The helical transmembrane segment at 135-155 (ILPSVIVISMFASVFTLNIIS) threads the bilayer. Topologically, residues 156-177 (LDRFTQVITPVWAQNHRSLLLA) are cytoplasmic. A helical membrane pass occupies residues 178–198 (RLSCVAVWILALLLSLPFMIL). Over 199–224 (RRTYEEFNMTVCTFDDDDFTTYGALS) the chain is Extracellular. The chain crosses the membrane as a helical span at residues 225 to 245 (IVRFVFGFLIPLMSIVTCYGI). Residues 246 to 262 (IARKLGSRHFRSGRAFR) lie on the Cytoplasmic side of the membrane. A helical membrane pass occupies residues 263-283 (IMLAVIVAFFLCWMPYHVLDL). Residues 284 to 301 (IRSYGGESSSMVALKVDP) lie on the Extracellular side of the membrane. A helical transmembrane segment spans residues 302–322 (LAISLAYVNSCLNPVLYVFMG). The Cytoplasmic segment spans residues 323 to 361 (QDFKNKVQLSLRRVFERAFSEEGTQISRSTQSQQVHSVL).

The protein belongs to the G-protein coupled receptor 1 family.

The protein localises to the cell membrane. Functionally, receptor for the chemotactic and inflammatory peptide anaphylatoxin C3a. This receptor stimulates chemotaxis, granule enzyme release and superoxide anion production. The chain is C3a anaphylatoxin chemotactic receptor (c3ar1) from Danio rerio (Zebrafish).